The sequence spans 577 residues: Acyl-coenzyme A synthetase ACSM1, mitochondrial (577 aa).

Residues 1 to 31 (MQWLMRFRTLWGIHKSFHNIHPAPSQLRCRS) constitute a mitochondrion transit peptide. Lysine 85 carries the post-translational modification N6-succinyllysine. Lysine 146 is modified (N6-acetyllysine; alternate). N6-succinyllysine; alternate is present on lysine 146. Lysine 183 is subject to N6-succinyllysine. Lysine 204 carries the N6-acetyllysine; alternate modification. At lysine 204 the chain carries N6-succinyllysine; alternate. An N6-acetyllysine modification is found at lysine 214. 226 to 234 (TSGTTGFPK) lines the ATP pocket. At lysine 237 the chain carries N6-succinyllysine. Residues lysine 356 and lysine 391 each carry the N6-acetyllysine; alternate modification. 2 positions are modified to N6-succinyllysine; alternate: lysine 356 and lysine 391. The ATP site is built by aspartate 452 and arginine 467. An N6-acetyllysine modification is found at lysine 531. Residue lysine 538 is modified to N6-acetyllysine; alternate. At lysine 538 the chain carries N6-succinyllysine; alternate. Lysine 549 is modified (N6-acetyllysine). Position 563 (lysine 563) interacts with ATP.

This sequence belongs to the ATP-dependent AMP-binding enzyme family. As to quaternary structure, monomer. The cofactor is Mg(2+). Requires Mn(2+) as cofactor.

It localises to the mitochondrion matrix. The protein localises to the mitochondrion. The enzyme catalyses a medium-chain fatty acid + ATP + CoA = a medium-chain fatty acyl-CoA + AMP + diphosphate. The catalysed reaction is benzoate + ATP + CoA = benzoyl-CoA + AMP + diphosphate. It carries out the reaction (R)-lipoate + GTP + H(+) = (R)-lipoyl-GMP + diphosphate. It catalyses the reaction octanoate + ATP + CoA = octanoyl-CoA + AMP + diphosphate. The enzyme catalyses decanoate + ATP + CoA = decanoyl-CoA + AMP + diphosphate. The catalysed reaction is dodecanoate + ATP + CoA = dodecanoyl-CoA + AMP + diphosphate. It carries out the reaction tetradecanoate + ATP + CoA = tetradecanoyl-CoA + AMP + diphosphate. It catalyses the reaction hexanoate + ATP + CoA = hexanoyl-CoA + AMP + diphosphate. The enzyme catalyses butanoate + ATP + CoA = butanoyl-CoA + AMP + diphosphate. The catalysed reaction is hexadecanoate + ATP + CoA = hexadecanoyl-CoA + AMP + diphosphate. Its activity is regulated as follows. Activated by monovalent cations, such as potassium, rubidium or ammonium. Its function is as follows. Catalyzes the activation of fatty acids by CoA to produce an acyl-CoA, the first step in fatty acid metabolism. Capable of activating medium-chain fatty acids (e.g. butyric (C4) to decanoic (C10) acids), and certain carboxylate-containing xenobiotics, e.g. benzoate. Also catalyzes the activation of lipoate to lipoyl-nucleoside monophosphate. Activates lipoate with GTP at a 1000-fold higher rate than with ATP and activates both (R)- and (S)-lipoate to the respective lipoyl-GMP, with a preference for (R)-lipoate. This chain is Acyl-coenzyme A synthetase ACSM1, mitochondrial (ACSM1), found in Homo sapiens (Human).